The sequence spans 239 residues: Phosphoribosylaminoimidazole-succinocarboxamide synthase (239 aa).

Belongs to the SAICAR synthetase family.

It carries out the reaction 5-amino-1-(5-phospho-D-ribosyl)imidazole-4-carboxylate + L-aspartate + ATP = (2S)-2-[5-amino-1-(5-phospho-beta-D-ribosyl)imidazole-4-carboxamido]succinate + ADP + phosphate + 2 H(+). It participates in purine metabolism; IMP biosynthesis via de novo pathway; 5-amino-1-(5-phospho-D-ribosyl)imidazole-4-carboxamide from 5-amino-1-(5-phospho-D-ribosyl)imidazole-4-carboxylate: step 1/2. The sequence is that of Phosphoribosylaminoimidazole-succinocarboxamide synthase from Bacillus mycoides (strain KBAB4) (Bacillus weihenstephanensis).